The following is a 732-amino-acid chain: ATP-dependent RNA helicase DBP7 (732 aa).

Residues 1 to 91 (MIEDDGMLLN…QSNNESVKDV (91 aa)) form a disordered region. Basic and acidic residues-rich tracts occupy residues 42 to 56 (MMMEGREPVKRKTFE) and 64 to 75 (DTNKKPKSDSSG). Residues 76–86 (RKSYNQQSNNE) are compositionally biased toward polar residues. The short motif at 144–173 (DNFDSLKIEQQLVNHLNEKMRIQKPTSIQK) is the Q motif element. The Helicase ATP-binding domain occupies 178 to 372 (QLLSSKNNDL…NVALQNYKMI (195 aa)). Position 191 to 198 (191 to 198 (AQTGSGKT)) interacts with ATP. The DEAD box motif lies at 307–310 (DEAD). One can recognise a Helicase C-terminal domain in the interval 420 to 599 (QKKKKLDYVS…KLVNYTNDLL (180 aa)). Positions 692–711 (MGLQNTKNGGEAKKNSKESA) are disordered. The segment covering 701 to 711 (GEAKKNSKESA) has biased composition (basic and acidic residues).

Belongs to the DEAD box helicase family. DDX31/DBP7 subfamily.

Its subcellular location is the nucleus. It localises to the nucleolus. It carries out the reaction ATP + H2O = ADP + phosphate + H(+). Its function is as follows. ATP-binding RNA helicase involved in the biogenesis of 60S ribosomal subunits and is required for the normal formation of 25S and 5.8S rRNAs. The chain is ATP-dependent RNA helicase DBP7 (DBP7) from Vanderwaltozyma polyspora (strain ATCC 22028 / DSM 70294 / BCRC 21397 / CBS 2163 / NBRC 10782 / NRRL Y-8283 / UCD 57-17) (Kluyveromyces polysporus).